Here is a 283-residue protein sequence, read N- to C-terminus: Thymidylate synthase (283 aa).

Arg-22 contributes to the dUMP binding site. Residue Cys-160 is the Nucleophile of the active site. Residues 180-183, Asn-191, and 221-223 each bind dUMP; these read RSCD and HIY. Residue Asp-183 coordinates (6R)-5,10-methylene-5,6,7,8-tetrahydrofolate. Ser-282 serves as a coordination point for (6R)-5,10-methylene-5,6,7,8-tetrahydrofolate.

It belongs to the thymidylate synthase family. Bacterial-type ThyA subfamily. Homodimer.

The protein localises to the cytoplasm. It catalyses the reaction dUMP + (6R)-5,10-methylene-5,6,7,8-tetrahydrofolate = 7,8-dihydrofolate + dTMP. It functions in the pathway pyrimidine metabolism; dTTP biosynthesis. Its function is as follows. Catalyzes the reductive methylation of 2'-deoxyuridine-5'-monophosphate (dUMP) to 2'-deoxythymidine-5'-monophosphate (dTMP) while utilizing 5,10-methylenetetrahydrofolate (mTHF) as the methyl donor and reductant in the reaction, yielding dihydrofolate (DHF) as a by-product. This enzymatic reaction provides an intracellular de novo source of dTMP, an essential precursor for DNA biosynthesis. The polypeptide is Thymidylate synthase (Psychromonas ingrahamii (strain DSM 17664 / CCUG 51855 / 37)).